The following is a 343-amino-acid chain: Glucan endo-1,3-beta-glucosidase, acidic isoform GI9 (343 aa).

Positions 1 to 29 are cleaved as a signal peptide; that stretch reads MTLCIKNGFLAAALVLVGLLICSIQMIGA. A Pyrrolidone carboxylic acid modification is found at Gln-30. Glu-124 acts as the Proton donor in catalysis. Glu-264 serves as the catalytic Nucleophile.

This sequence belongs to the glycosyl hydrolase 17 family.

It is found in the secreted. It localises to the extracellular space. The catalysed reaction is Hydrolysis of (1-&gt;3)-beta-D-glucosidic linkages in (1-&gt;3)-beta-D-glucans.. Its function is as follows. Implicated in the defense of plants against pathogens. In Nicotiana tabacum (Common tobacco), this protein is Glucan endo-1,3-beta-glucosidase, acidic isoform GI9 (PR2).